Reading from the N-terminus, the 608-residue chain is Putative multicopper oxidase GMC1 (608 aa).

3 Plastocyanin-like domains span residues 51 to 163, 243 to 374, and 421 to 548; these read INGY…LIVE, LING…ELYR, and ERTF…FEVP. The Cu cation site is built by His100, His102, His145, and His147. Cu cation contacts are provided by His452, His455, His457, His530, Cys531, His532, and His536.

This sequence belongs to the multicopper oxidase family. Cu cation serves as cofactor.

Functionally, could be an iron transport multicopper oxidase, which is required for Fe(2+) high affinity uptake. May be required to oxidize Fe(2+) and release it from the transporter. Essential component of copper-dependent iron transport. Involved in meiotic prophase and synaptonemal complex (SC) assembly. The protein is Putative multicopper oxidase GMC1 (GMC1) of Saccharomyces cerevisiae (strain ATCC 204508 / S288c) (Baker's yeast).